Consider the following 173-residue polypeptide: RNA polymerase sigma factor TcsR (173 aa).

Positions 122–169 (IKDLTQNEKNILRKIYLHGLRESEISRELNISRQAVNKTHLRALEKLK) are sigma-70 factor domain-4. A DNA-binding region (H-T-H motif) is located at residues 143 to 162 (ESEISRELNISRQAVNKTHL).

Belongs to the sigma-70 factor family.

Functionally, sigma factors are initiation factors that promote the attachment of RNA polymerase to specific initiation sites and are then released. Transcriptional regulator specifically required to activate expression of the toxin gene locus, composed of tcsL and tcdE/utxA. This is RNA polymerase sigma factor TcsR from Paraclostridium sordellii (Clostridium sordellii).